We begin with the raw amino-acid sequence, 241 residues long: Uridylate kinase (241 aa).

ATP contacts are provided by residues 15–18 (KLSG), glycine 58, and arginine 62. Residues aspartate 77 and 138 to 145 (TGNPYFTT) each bind UMP. 3 residues coordinate ATP: threonine 165, tyrosine 171, and aspartate 174.

This sequence belongs to the UMP kinase family. Homohexamer.

The protein localises to the cytoplasm. The enzyme catalyses UMP + ATP = UDP + ADP. It participates in pyrimidine metabolism; CTP biosynthesis via de novo pathway; UDP from UMP (UMPK route): step 1/1. Its activity is regulated as follows. Inhibited by UTP. In terms of biological role, catalyzes the reversible phosphorylation of UMP to UDP. In Desulfotalea psychrophila (strain LSv54 / DSM 12343), this protein is Uridylate kinase.